A 115-amino-acid chain; its full sequence is NADH-ubiquinone oxidoreductase chain 3 (115 aa).

The next 3 membrane-spanning stretches (helical) occupy residues 4–24 (LLVL…AFWL), 55–75 (FFLV…LLPL), and 87–107 (MTLT…YEWL).

This sequence belongs to the complex I subunit 3 family. As to quaternary structure, core subunit of respiratory chain NADH dehydrogenase (Complex I) which is composed of 45 different subunits. Interacts with TMEM186. Interacts with TMEM242.

It is found in the mitochondrion inner membrane. The enzyme catalyses a ubiquinone + NADH + 5 H(+)(in) = a ubiquinol + NAD(+) + 4 H(+)(out). Functionally, core subunit of the mitochondrial membrane respiratory chain NADH dehydrogenase (Complex I) which catalyzes electron transfer from NADH through the respiratory chain, using ubiquinone as an electron acceptor. Essential for the catalytic activity of complex I. The chain is NADH-ubiquinone oxidoreductase chain 3 from Peromyscus eremicus (Cactus mouse).